A 216-amino-acid polypeptide reads, in one-letter code: Probable GTP-binding protein EngB (216 aa).

Residues 24–205 (ATPEIAFVGR…WARLAALAAE (182 aa)) enclose the EngB-type G domain. Residues 32–39 (GRSNVGKS), 59–63 (GRTRA), 86–89 (DLPG), 153–156 (TKTD), and 184–186 (FSA) each bind GTP. Mg(2+)-binding residues include serine 39 and threonine 61.

The protein belongs to the TRAFAC class TrmE-Era-EngA-EngB-Septin-like GTPase superfamily. EngB GTPase family. It depends on Mg(2+) as a cofactor.

Functionally, necessary for normal cell division and for the maintenance of normal septation. This chain is Probable GTP-binding protein EngB, found in Anaeromyxobacter dehalogenans (strain 2CP-C).